The chain runs to 164 residues: Nucleotide-binding protein Acid345_2028 (164 aa).

It belongs to the YajQ family.

In terms of biological role, nucleotide-binding protein. This is Nucleotide-binding protein Acid345_2028 from Koribacter versatilis (strain Ellin345).